We begin with the raw amino-acid sequence, 556 residues long: Glucose-6-phosphate isomerase (556 aa).

Glu360 acts as the Proton donor in catalysis. Catalysis depends on residues His391 and Lys519.

This sequence belongs to the GPI family.

It is found in the cytoplasm. It catalyses the reaction alpha-D-glucose 6-phosphate = beta-D-fructose 6-phosphate. It participates in carbohydrate biosynthesis; gluconeogenesis. It functions in the pathway carbohydrate degradation; glycolysis; D-glyceraldehyde 3-phosphate and glycerone phosphate from D-glucose: step 2/4. Functionally, catalyzes the reversible isomerization of glucose-6-phosphate to fructose-6-phosphate. The chain is Glucose-6-phosphate isomerase from Acinetobacter baumannii (strain ATCC 17978 / DSM 105126 / CIP 53.77 / LMG 1025 / NCDC KC755 / 5377).